The chain runs to 450 residues: F-box protein KIB3 (450 aa).

Residues 20 to 50 (DLVRLILERLSFVDFHRARCVSSTWYVASKS) form the F-box domain.

Its subcellular location is the cytoplasm. The protein localises to the nucleus. It is found in the nucleolus. Its function is as follows. Component of SCF(ASK-cullin-F-box) E3 ubiquitin ligase complexes, which may mediate the ubiquitination and subsequent proteasomal degradation of target proteins. Required for brassinosteroid (BR) signal transduction. Mediates ASK7/BIN2/SK21 inactivation both by competing with substrate binding (e.g. BZR1) and by promoting its ubiquitination and subsequent proteasomal degradation. The polypeptide is F-box protein KIB3 (Arabidopsis thaliana (Mouse-ear cress)).